The following is a 951-amino-acid chain: Leucine-rich repeat-containing G-protein coupled receptor 4 (951 aa).

Positions 1 to 24 (MPGPLGLLCFLALGLLGSAGPSGA) are cleaved as a signal peptide. Residues 25–57 (APPLCAAPCSCDGDRRVDCSGKGLTAVPEGLSA) form the LRRNT domain. The Extracellular portion of the chain corresponds to 25 to 544 (APPLCAAPCS…LLGSWMIRLT (520 aa)). 2 disulfide bridges follow: Cys-29–Cys-35 and Cys-33–Cys-43. LRR repeat units lie at residues 58–79 (FTQALDISMNNITQLPEDAFKN), 82–103 (FLEELQLAGNDLSFIHPKALSG), 106–127 (ELKVLTLQNNQLKTVPSEAIRG), 130–151 (ALQSLRLDANHITSVPEDSFEG), 154–177 (QLRHLWLDDNSLTEVPVHPLSNLP), 178–199 (TLQALTLALNKISSIPDFAFTN), 202–223 (SLVVLHLHNNKIRSLSQHCFDG), 226–247 (NLETLDLNYNNLGEFPQAIKAL), 249–270 (SLKELGFHSNSISVIPDGAFDG), and 273–294 (LLRTIHLYDNPLSFVGNSAFHN). Residue Asn-68 is glycosylated (N-linked (GlcNAc...) asparagine). An N-linked (GlcNAc...) asparagine glycan is attached at Asn-199. Asn-294 and Asn-314 each carry an N-linked (GlcNAc...) asparagine glycan. LRR repeat units lie at residues 320–341 (HLESLTLTGTKISSIPNNLCQE), 344–365 (MLRTLDLSYNNIRDLPSFNGCH), 366–387 (ALEEISLQRNQIYQIKEGTFQG), 390–411 (SLRILDLSRNLIHEIHSRAFAT), and 414–435 (PITNLDVSFNELTSFPTEGLNG). Cys-339 and Cys-364 form a disulfide bridge. Disulfide bonds link Cys-470-Cys-522 and Cys-471-Cys-476. N-linked (GlcNAc...) asparagine glycosylation is present at Asn-505. A helical membrane pass occupies residues 545–565 (VWFIFLVALFFNLLVILTTFA). Residues 566 to 575 (SCTSLPSSKL) are Cytoplasmic-facing. Residues 576-596 (FIGLISVSNLFMGIYTGILTF) form a helical membrane-spanning segment. Topologically, residues 597–620 (LDAVSWGRFAEFGIWWETGSGCKV) are extracellular. A disulfide bond links Cys-618 and Cys-693. A helical transmembrane segment spans residues 621–641 (AGFLAVFSSESAIFLLMLATV). At 642-661 (ERSLSAKDIMKNGKSNHLKQ) the chain is on the cytoplasmic side. The helical transmembrane segment at 662 to 682 (FRVAALLAFLGATVAGCFPLF) threads the bilayer. At 683–703 (HRGEYSASPLCLPFPTGETPS) the chain is on the extracellular side. The helical transmembrane segment at 704 to 724 (LGFTVTLVLLNSLAFLLMAVI) threads the bilayer. Residues 725–756 (YTKLYCNLEKEDLSENSQSSMIKHVAWLIFTN) lie on the Cytoplasmic side of the membrane. Residues 757 to 777 (CIFFCPVAFFSFAPLITAISI) traverse the membrane as a helical segment. At 778 to 783 (SPEIMK) the chain is on the extracellular side. Residues 784-804 (SVTLIFFPLPACLNPVLYVFF) traverse the membrane as a helical segment. Topologically, residues 805 to 951 (NPKFKEDWKL…YAYNLPRVKD (147 aa)) are cytoplasmic. A Phosphoserine modification is found at Ser-920.

The protein belongs to the G-protein coupled receptor 1 family. Expressed in multiple steroidogenic tissues: placenta, ovary, testis and adrenal. Expressed also in spinal cord, thyroid, stomach, trachea, heart, pancreas, kidney, prostate and spleen.

The protein resides in the cell membrane. Its function is as follows. Receptor for R-spondins that potentiates the canonical Wnt signaling pathway and is involved in the formation of various organs. Upon binding to R-spondins (RSPO1, RSPO2, RSPO3 or RSPO4), associates with phosphorylated LRP6 and frizzled receptors that are activated by extracellular Wnt receptors, triggering the canonical Wnt signaling pathway to increase expression of target genes. In contrast to classical G-protein coupled receptors, does not activate heterotrimeric G-proteins to transduce the signal. Its function as activator of the Wnt signaling pathway is required for the development of various organs, including liver, kidney, intestine, bone, reproductive tract and eye. May also act as a receptor for norrin (NDP), such results however require additional confirmation in vivo. Required during spermatogenesis to activate the Wnt signaling pathway in peritubular myoid cells. Required for the maintenance of intestinal stem cells and Paneth cell differentiation in postnatal intestinal crypts. Acts as a regulator of bone formation and remodeling. Involved in kidney development; required for maintaining the ureteric bud in an undifferentiated state. Involved in the development of the anterior segment of the eye. Required during erythropoiesis. Also acts as a negative regulator of innate immunity by inhibiting TLR2/TLR4 associated pattern-recognition and pro-inflammatory cytokine production. Plays an important role in regulating the circadian rhythms of plasma lipids, partially through regulating the rhythmic expression of MTTP. Required for proper development of GnRH neurons (gonadotropin-releasing hormone expressing neurons) that control the release of reproductive hormones from the pituitary gland. This chain is Leucine-rich repeat-containing G-protein coupled receptor 4 (LGR4), found in Homo sapiens (Human).